Consider the following 739-residue polypeptide: Exocyst complex component 3-like protein (739 aa).

Residues 1 to 370 (MDSAARDKTQ…DVSDLEPLLT (370 aa)) form a mediates interaction with EXOC2, EXOC4 and EXOC5 region.

Belongs to the SEC6 family. In terms of assembly, interacts with EXOC2, EXOC4 and EXOC5; may be part of the exocyst.

The protein resides in the cytoplasmic vesicle. Its subcellular location is the secretory vesicle. In terms of biological role, as part of the exocyst, may play a role in regulated exocytosis of insulin granules. The sequence is that of Exocyst complex component 3-like protein (EXOC3L1) from Bos taurus (Bovine).